We begin with the raw amino-acid sequence, 624 residues long: Actin-related protein 8 (624 aa).

N-acetylmethionine is present on methionine 1. Residues 1 to 25 (MTQAEKGDTENGKEKGGEKEKEQRG) are compositionally biased toward basic and acidic residues. Residues 1 to 29 (MTQAEKGDTENGKEKGGEKEKEQRGVKRP) form a disordered region. ATP is bound by residues serine 55 and threonine 56. Phosphoserine is present on serine 132. 283–286 (DVGD) contacts ATP. The residue at position 412 (serine 412) is a Phosphoserine. Residues 430-462 (SKQEQSAKATADRKSASKPIGFEGDLRGQSSDL) form a disordered region.

It belongs to the actin family. ARP8 subfamily. As to quaternary structure, component of the chromatin remodeling INO80 complex; specifically part of a complex module associated with the DBINO domain of INO80. Interacts with ACTR5; the interaction is observed in asynchronous (interphase) cells but not in metaphase-arrested cells indicative for a possible dissociation of the INO80 complex in mitotic cells. Exists as monomers and dimers, but the dimer is most probably the biologically relevant form required for stable interactions with histones that exploits the twofold symmetry of the nucleosome core.

The protein localises to the nucleus. The protein resides in the chromosome. In terms of biological role, plays an important role in the functional organization of mitotic chromosomes. Exhibits low basal ATPase activity, and unable to polymerize. Functionally, proposed core component of the chromatin remodeling INO80 complex which is involved in transcriptional regulation, DNA replication and probably DNA repair. Required for the recruitment of INO80 (and probably the INO80 complex) to sites of DNA damage. Strongly prefer nucleosomes and H3-H4 tetramers over H2A-H2B dimers, suggesting it may act as a nucleosome recognition module within the complex. This Homo sapiens (Human) protein is Actin-related protein 8 (ACTR8).